Reading from the N-terminus, the 284-residue chain is Spermidine synthase (284 aa).

In terms of domain architecture, PABS spans 6–241 (NGWFSEISEF…GSIGFILCSL (236 aa)). Residue Q37 coordinates S-adenosyl 3-(methylsulfanyl)propylamine. Residue Y67 participates in putrescine binding. S-adenosyl 3-(methylsulfanyl)propylamine-binding positions include Q68, D92, E112, 143–144 (DG), and D161. Residue D161 is the Proton acceptor of the active site. Putrescine contacts are provided by residues 161-164 (DSSD) and Y229.

The protein belongs to the spermidine/spermine synthase family.

It carries out the reaction S-adenosyl 3-(methylsulfanyl)propylamine + putrescine = S-methyl-5'-thioadenosine + spermidine + H(+). The protein operates within amine and polyamine biosynthesis; spermidine biosynthesis; spermidine from putrescine: step 1/1. Functionally, catalyzes the production of spermidine from putrescine and decarboxylated S-adenosylmethionine (dcSAM). Has a strong preference for putrescine as substrate. The sequence is that of Spermidine synthase (spsA) from Dictyostelium discoideum (Social amoeba).